The sequence spans 577 residues: General transcription factor IIF subunit 1 (577 aa).

A disordered region spans residues 1 to 36 (MSSASKSTPSAASGSSTSAAAAAAASVASGSASSSA). Residues Ser183, Ser246, Ser250, and Ser252 each carry the phosphoserine modification. The disordered stretch occupies residues 236–508 (KITDMDEWID…TSLPTSFSGG (273 aa)). Residues 240–256 (MDEWIDSEDESDSEDEE) show a composition bias toward acidic residues. Positions 257–271 (DKKKKEQEDSDDGKA) are enriched in basic and acidic residues. Positions 272–285 (KGKGKKGADKKKKK) are enriched in basic residues. The segment covering 289 to 304 (DDEAFEESDDGDEEGR) has biased composition (acidic residues). Positions 319-341 (PEAKVDKDMKGVAEEDALRKLLT) are enriched in basic and acidic residues. Residue Thr341 is modified to Phosphothreonine. Phosphoserine occurs at positions 342, 352, and 355. The segment covering 362-376 (GEKKKKDKGKDEVSK) has biased composition (basic and acidic residues). The span at 392 to 406 (SNGSGDSSTDFSSDS) shows a compositional bias: low complexity. Residues 423–437 (VVKDKDKEKEKEKES) show a composition bias toward basic and acidic residues. Positions 438–456 (AASSKVIASSSNANKSRSA) are enriched in low complexity. 2 positions are modified to phosphoserine: Ser453 and Ser455. Residue Thr457 is modified to Phosphothreonine. Composition is skewed to polar residues over residues 471–489 (SLPSDLTASDTSNSPTSTP) and 496–506 (EISTSLPTSFS). A phosphoserine mark is found at Ser482 and Ser484. The residue at position 488 (Thr488) is a Phosphothreonine.

This sequence belongs to the TFIIF alpha subunit family. As to quaternary structure, heterodimer of an alpha and a beta subunit. In terms of processing, phosphorylated on Ser and other residues by TAF1 and casein kinase II-like kinases.

It is found in the nucleus. In terms of biological role, TFIIF is a general transcription initiation factor that binds to RNA polymerase II and helps to recruit it to the initiation complex in collaboration with TFIIB. It promotes transcription elongation. This chain is General transcription factor IIF subunit 1, found in Drosophila melanogaster (Fruit fly).